The following is a 523-amino-acid chain: Probable malate:quinone oxidoreductase 1 (523 aa).

This sequence belongs to the MQO family. It depends on FAD as a cofactor.

The enzyme catalyses (S)-malate + a quinone = a quinol + oxaloacetate. The protein operates within carbohydrate metabolism; tricarboxylic acid cycle; oxaloacetate from (S)-malate (quinone route): step 1/1. The chain is Probable malate:quinone oxidoreductase 1 from Pseudomonas aeruginosa (strain ATCC 15692 / DSM 22644 / CIP 104116 / JCM 14847 / LMG 12228 / 1C / PRS 101 / PAO1).